We begin with the raw amino-acid sequence, 581 residues long: NADH-quinone oxidoreductase subunit C/D (581 aa).

Residues 1–172 (MSASELVTEL…PLFNMTASLF (172 aa)) are NADH dehydrogenase I subunit C. Residues 196 to 581 (ELMILNYGPH…IDYVMSDVDR (386 aa)) are NADH dehydrogenase I subunit D.

It in the N-terminal section; belongs to the complex I 30 kDa subunit family. In the C-terminal section; belongs to the complex I 49 kDa subunit family. As to quaternary structure, NDH-1 is composed of 13 different subunits. Subunits NuoB, CD, E, F, and G constitute the peripheral sector of the complex.

It is found in the cell inner membrane. It catalyses the reaction a quinone + NADH + 5 H(+)(in) = a quinol + NAD(+) + 4 H(+)(out). Its function is as follows. NDH-1 shuttles electrons from NADH, via FMN and iron-sulfur (Fe-S) centers, to quinones in the respiratory chain. The immediate electron acceptor for the enzyme in this species is believed to be ubiquinone. Couples the redox reaction to proton translocation (for every two electrons transferred, four hydrogen ions are translocated across the cytoplasmic membrane), and thus conserves the redox energy in a proton gradient. The protein is NADH-quinone oxidoreductase subunit C/D of Rhodopseudomonas palustris (strain TIE-1).